Reading from the N-terminus, the 72-residue chain is NAD(P)H-quinone oxidoreductase subunit O (72 aa).

This sequence belongs to the complex I NdhO subunit family. As to quaternary structure, NDH-1 can be composed of about 15 different subunits; different subcomplexes with different compositions have been identified which probably have different functions.

The protein localises to the cellular thylakoid membrane. The catalysed reaction is a plastoquinone + NADH + (n+1) H(+)(in) = a plastoquinol + NAD(+) + n H(+)(out). The enzyme catalyses a plastoquinone + NADPH + (n+1) H(+)(in) = a plastoquinol + NADP(+) + n H(+)(out). Functionally, NDH-1 shuttles electrons from an unknown electron donor, via FMN and iron-sulfur (Fe-S) centers, to quinones in the respiratory and/or the photosynthetic chain. The immediate electron acceptor for the enzyme in this species is believed to be plastoquinone. Couples the redox reaction to proton translocation, and thus conserves the redox energy in a proton gradient. Cyanobacterial NDH-1 also plays a role in inorganic carbon-concentration. The protein is NAD(P)H-quinone oxidoreductase subunit O of Rippkaea orientalis (strain PCC 8801 / RF-1) (Cyanothece sp. (strain PCC 8801)).